We begin with the raw amino-acid sequence, 691 residues long: Elongation factor G (691 aa).

Residues glutamate 8 to isoleucine 283 form the tr-type G domain. Residues alanine 17–threonine 24, aspartate 81–histidine 85, and asparagine 135–aspartate 138 contribute to the GTP site.

It belongs to the TRAFAC class translation factor GTPase superfamily. Classic translation factor GTPase family. EF-G/EF-2 subfamily.

The protein localises to the cytoplasm. Catalyzes the GTP-dependent ribosomal translocation step during translation elongation. During this step, the ribosome changes from the pre-translocational (PRE) to the post-translocational (POST) state as the newly formed A-site-bound peptidyl-tRNA and P-site-bound deacylated tRNA move to the P and E sites, respectively. Catalyzes the coordinated movement of the two tRNA molecules, the mRNA and conformational changes in the ribosome. The polypeptide is Elongation factor G (Methylocella silvestris (strain DSM 15510 / CIP 108128 / LMG 27833 / NCIMB 13906 / BL2)).